The primary structure comprises 129 residues: DNA-directed RNA polymerase subunit omega (129 aa).

The segment at 76–101 is disordered; the sequence is EVDEPEPDPVTLAASAADGEDDDQPE.

It belongs to the RNA polymerase subunit omega family. As to quaternary structure, the RNAP catalytic core consists of 2 alpha, 1 beta, 1 beta' and 1 omega subunit. When a sigma factor is associated with the core the holoenzyme is formed, which can initiate transcription.

The catalysed reaction is RNA(n) + a ribonucleoside 5'-triphosphate = RNA(n+1) + diphosphate. Its function is as follows. Promotes RNA polymerase assembly. Latches the N- and C-terminal regions of the beta' subunit thereby facilitating its interaction with the beta and alpha subunits. The protein is DNA-directed RNA polymerase subunit omega of Agrobacterium fabrum (strain C58 / ATCC 33970) (Agrobacterium tumefaciens (strain C58)).